The primary structure comprises 94 residues: DNA-directed RNA polymerase subunit omega (94 aa).

The protein belongs to the RNA polymerase subunit omega family. The RNAP catalytic core consists of 2 alpha, 1 beta, 1 beta' and 1 omega subunit. When a sigma factor is associated with the core the holoenzyme is formed, which can initiate transcription.

It catalyses the reaction RNA(n) + a ribonucleoside 5'-triphosphate = RNA(n+1) + diphosphate. Its function is as follows. Promotes RNA polymerase assembly. Latches the N- and C-terminal regions of the beta' subunit thereby facilitating its interaction with the beta and alpha subunits. This is DNA-directed RNA polymerase subunit omega from Shewanella pealeana (strain ATCC 700345 / ANG-SQ1).